The following is a 523-amino-acid chain: MELTMASTMSLALLVLSAAYVLVALRRSRSSSSKPRRLPPSPPGWPVIGHLHLMSGMPHHALAELARTMRAPLFRMRLGSVPAVVISKPDLARAALTTNDAALASRPHLLSGQFLSFGCSDVTFAPAGPYHRMARRVVVSELLSARRVATYGAVRVKELRRLLAHLTKNTSPAKPVDLSECFLNLANDVLCRVAFGRRFPHGEGDKLGAVLAEAQDLFAGFTIGDFFPELEPVASTVTGLRRRLKKCLADLREACDVIVDEHISGNRQRIPGDRDEDFVDVLLRVQKSPDLEVPLTDDNLKALVLDMFVAGTDTTFATLEWVMTELVRHPRILKKAQEEVRRVVGDSGRVEESHLGELHYMRAIIKETFRLHPAVPLLVPRESVAPCTLGGYDIPARTRVFINTFAMGRDPEIWDNPLEYSPERFESAGGGGEIDLKDPDYKLLPFGGGRRGCPGYTFALATVQVSLASLLYHFEWALPAGVRAEDVNLDETFGLATRKKEPLFVAVRKSDAYEFKGEELSEV.

Residues 5 to 25 (MASTMSLALLVLSAAYVLVAL) traverse the membrane as a helical segment. C453 provides a ligand contact to heme.

This sequence belongs to the cytochrome P450 family. Heme is required as a cofactor.

It localises to the endoplasmic reticulum membrane. It carries out the reaction tryptamine + reduced [NADPH--hemoprotein reductase] + O2 = serotonin + oxidized [NADPH--hemoprotein reductase] + H2O + H(+). Its function is as follows. Involved in serotonin biosynthesis. Catalyzes the conversion of tryptamine to serotonin. Accumulation of serotonin may play a role in innate immunity. This Oryza sativa subsp. japonica (Rice) protein is Tryptamine 5-hydroxylase.